Consider the following 366-residue polypeptide: tRNA(Met) cytidine acetate ligase (366 aa).

ATP is bound by residues 7-20 (IAEFNPFHNGHQYL), Gly101, Asn145, and Arg170.

Belongs to the TmcAL family.

The protein localises to the cytoplasm. It catalyses the reaction cytidine(34) in elongator tRNA(Met) + acetate + ATP = N(4)-acetylcytidine(34) in elongator tRNA(Met) + AMP + diphosphate. Its function is as follows. Catalyzes the formation of N(4)-acetylcytidine (ac(4)C) at the wobble position of elongator tRNA(Met), using acetate and ATP as substrates. First activates an acetate ion to form acetyladenylate (Ac-AMP) and then transfers the acetyl group to tRNA to form ac(4)C34. The chain is tRNA(Met) cytidine acetate ligase from Pediococcus pentosaceus (strain ATCC 25745 / CCUG 21536 / LMG 10740 / 183-1w).